A 180-amino-acid chain; its full sequence is Adenine phosphoribosyltransferase (180 aa).

This sequence belongs to the purine/pyrimidine phosphoribosyltransferase family. In terms of assembly, homodimer.

The protein resides in the cytoplasm. It carries out the reaction AMP + diphosphate = 5-phospho-alpha-D-ribose 1-diphosphate + adenine. It participates in purine metabolism; AMP biosynthesis via salvage pathway; AMP from adenine: step 1/1. Functionally, catalyzes a salvage reaction resulting in the formation of AMP, that is energically less costly than de novo synthesis. The chain is Adenine phosphoribosyltransferase from Rhizobium johnstonii (strain DSM 114642 / LMG 32736 / 3841) (Rhizobium leguminosarum bv. viciae).